A 475-amino-acid chain; its full sequence is ATP synthase subunit beta, chloroplastic (475 aa).

Residue 156–163 (GGAGVGKT) participates in ATP binding.

Belongs to the ATPase alpha/beta chains family. In terms of assembly, F-type ATPases have 2 components, CF(1) - the catalytic core - and CF(0) - the membrane proton channel. CF(1) has five subunits: alpha(3), beta(3), gamma(1), delta(1), epsilon(1). CF(0) has four main subunits: a(1), b(1), b'(1) and c(9-12).

It is found in the plastid. It localises to the chloroplast thylakoid membrane. The catalysed reaction is ATP + H2O + 4 H(+)(in) = ADP + phosphate + 5 H(+)(out). Produces ATP from ADP in the presence of a proton gradient across the membrane. The catalytic sites are hosted primarily by the beta subunits. This chain is ATP synthase subunit beta, chloroplastic, found in Phaeodactylum tricornutum (strain CCAP 1055/1).